Consider the following 457-residue polypeptide: Methylphosphonate synthase (457 aa).

The HTH cro/C1-type 1 domain maps to 23 to 74 (ILNDIKRRPEDAANELGVSIEEINSIISGKQKISPSLIEKAVNIWPVNERDF). A DNA-binding region (H-T-H motif) is located at residues 32–50 (EDAANELGVSIEEINSIIS). Fe cation is bound by residues His-148 and His-190. In terms of domain architecture, HTH cro/C1-type 2 spans 247 to 301 (LEYYFELSNLTKEKFAKRTNFSMETLADFFTKKKLPTFDELKIIAKALNVNSRDL). A DNA-binding region (H-T-H motif) is located at residues 258–277 (KEKFAKRTNFSMETLADFFT).

Belongs to the non-heme iron-dependent dioxygenase family. It depends on Fe(2+) as a cofactor.

The enzyme catalyses 2-hydroxyethylphosphonate + O2 = methylphosphonate + hydrogencarbonate + H(+). It functions in the pathway phosphorus metabolism; phosphonate biosynthesis. Its function is as follows. Catalyzes the conversion of 2-hydroxyethylphosphonate into methylphosphonate in the methylphosphonate biosynthesis pathway. This is Methylphosphonate synthase (mpnS) from Nitrosopumilus maritimus (strain SCM1).